A 228-amino-acid polypeptide reads, in one-letter code: Phosphatidate cytidylyltransferase (228 aa).

6 helical membrane-spanning segments follow: residues 31–51 (FVVA…LVGL), 65–85 (IHYL…LIFL), 93–113 (LVIM…MIGG), 131–151 (WTGL…VSLI), 165–185 (IYLF…DLFI), and 206–226 (GVLD…GINI).

The protein belongs to the CDS family.

It is found in the cell membrane. It catalyses the reaction a 1,2-diacyl-sn-glycero-3-phosphate + CTP + H(+) = a CDP-1,2-diacyl-sn-glycerol + diphosphate. Its pathway is phospholipid metabolism; CDP-diacylglycerol biosynthesis; CDP-diacylglycerol from sn-glycerol 3-phosphate: step 3/3. This is Phosphatidate cytidylyltransferase (cdsA) from Rickettsia typhi (strain ATCC VR-144 / Wilmington).